Here is a 326-residue protein sequence, read N- to C-terminus: 4-hydroxy-3-methylbut-2-enyl diphosphate reductase (326 aa).

C22 serves as a coordination point for [4Fe-4S] cluster. The (2E)-4-hydroxy-3-methylbut-2-enyl diphosphate site is built by H51 and H84. Residues H51 and H84 each coordinate dimethylallyl diphosphate. H51 and H84 together coordinate isopentenyl diphosphate. C106 contacts [4Fe-4S] cluster. H134 serves as a coordination point for (2E)-4-hydroxy-3-methylbut-2-enyl diphosphate. H134 is a dimethylallyl diphosphate binding site. Residue H134 coordinates isopentenyl diphosphate. E136 acts as the Proton donor in catalysis. Residue T174 coordinates (2E)-4-hydroxy-3-methylbut-2-enyl diphosphate. Position 204 (C204) interacts with [4Fe-4S] cluster. (2E)-4-hydroxy-3-methylbut-2-enyl diphosphate is bound by residues S232, S233, N234, and S276. Dimethylallyl diphosphate-binding residues include S232, S233, N234, and S276. 4 residues coordinate isopentenyl diphosphate: S232, S233, N234, and S276.

It belongs to the IspH family. The cofactor is [4Fe-4S] cluster.

It carries out the reaction isopentenyl diphosphate + 2 oxidized [2Fe-2S]-[ferredoxin] + H2O = (2E)-4-hydroxy-3-methylbut-2-enyl diphosphate + 2 reduced [2Fe-2S]-[ferredoxin] + 2 H(+). It catalyses the reaction dimethylallyl diphosphate + 2 oxidized [2Fe-2S]-[ferredoxin] + H2O = (2E)-4-hydroxy-3-methylbut-2-enyl diphosphate + 2 reduced [2Fe-2S]-[ferredoxin] + 2 H(+). It functions in the pathway isoprenoid biosynthesis; dimethylallyl diphosphate biosynthesis; dimethylallyl diphosphate from (2E)-4-hydroxy-3-methylbutenyl diphosphate: step 1/1. Its pathway is isoprenoid biosynthesis; isopentenyl diphosphate biosynthesis via DXP pathway; isopentenyl diphosphate from 1-deoxy-D-xylulose 5-phosphate: step 6/6. In terms of biological role, catalyzes the conversion of 1-hydroxy-2-methyl-2-(E)-butenyl 4-diphosphate (HMBPP) into a mixture of isopentenyl diphosphate (IPP) and dimethylallyl diphosphate (DMAPP). Acts in the terminal step of the DOXP/MEP pathway for isoprenoid precursor biosynthesis. This Bordetella bronchiseptica (strain ATCC BAA-588 / NCTC 13252 / RB50) (Alcaligenes bronchisepticus) protein is 4-hydroxy-3-methylbut-2-enyl diphosphate reductase.